The chain runs to 173 residues: Ribulose bisphosphate carboxylase small subunit, chloroplastic 5 (173 aa).

The transit peptide at Met1–Gln49 directs the protein to the chloroplast.

The protein belongs to the RuBisCO small chain family. Heterohexadecamer of 8 large and 8 small subunits.

It localises to the plastid. The protein resides in the chloroplast. In terms of biological role, ruBisCO catalyzes two reactions: the carboxylation of D-ribulose 1,5-bisphosphate, the primary event in carbon dioxide fixation, as well as the oxidative fragmentation of the pentose substrate. Both reactions occur simultaneously and in competition at the same active site. Although the small subunit is not catalytic it is essential for maximal activity. This Flaveria pringlei protein is Ribulose bisphosphate carboxylase small subunit, chloroplastic 5.